Reading from the N-terminus, the 527-residue chain is Phospholipase A1-Igamma3, chloroplastic (527 aa).

A chloroplast-targeting transit peptide spans 1 to 52; that stretch reads MASLSLPITLKNPRFFSSSPQNIFKTQPQTLVLTTKFKTCSIICSSSCTSIS. The span at 55 to 65 shows a compositional bias: low complexity; it reads TTQQKQSNKQT. The segment at 55–82 is disordered; that stretch reads TTQQKQSNKQTHVSDNKREEKAEEEEEE. Basic and acidic residues predominate over residues 66–75; it reads HVSDNKREEK. The short motif at 300-304 is the GXSXG element; it reads GHSLG. Catalysis depends on Ser-302, which acts as the Acyl-ester intermediate. Active-site charge relay system residues include Asp-366 and His-423.

The protein belongs to the AB hydrolase superfamily. Lipase family. In terms of tissue distribution, highly expressed in flowers. Lower levels in seedlings, leaves and stems.

It localises to the plastid. The protein resides in the chloroplast. It catalyses the reaction 1,2-dihexadecanoyl-sn-glycero-3-phosphocholine + H2O = 2-hexadecanoyl-sn-glycero-3-phosphocholine + hexadecanoate + H(+). The enzyme catalyses a 1,2-diacyl-3-O-(beta-D-galactosyl)-sn-glycerol + H2O = an acyl-3-O-(beta-D-galactosyl)-sn-glycerol + a fatty acid + H(+). The catalysed reaction is a 1,2-diacyl-3-O-[alpha-D-galactosyl-(1-&gt;6)-beta-D-galactosyl]-sn-glycerol + H2O = acyl-3-O-[alpha-D-galactosyl-(1-&gt;6)-beta-D-galactosyl]-sn-glycerol + a fatty acid + H(+). In terms of biological role, acylhydrolase that catalyzes the hydrolysis of phosphatidylcholine at the sn-1 position. Moderate activity toward phosphatidylcholine (PC), monogalactosyldiacylglycerol (MGDG), digalactosyldiacylglycerol (DGDG) and triacylglycerol (TAG). In Arabidopsis thaliana (Mouse-ear cress), this protein is Phospholipase A1-Igamma3, chloroplastic.